The sequence spans 195 residues: Imidazoleglycerol-phosphate dehydratase (195 aa).

It belongs to the imidazoleglycerol-phosphate dehydratase family.

It is found in the cytoplasm. The enzyme catalyses D-erythro-1-(imidazol-4-yl)glycerol 3-phosphate = 3-(imidazol-4-yl)-2-oxopropyl phosphate + H2O. It functions in the pathway amino-acid biosynthesis; L-histidine biosynthesis; L-histidine from 5-phospho-alpha-D-ribose 1-diphosphate: step 6/9. In Cupriavidus pinatubonensis (strain JMP 134 / LMG 1197) (Cupriavidus necator (strain JMP 134)), this protein is Imidazoleglycerol-phosphate dehydratase.